The sequence spans 265 residues: NAD kinase (265 aa).

Asp45 serves as the catalytic Proton acceptor. NAD(+) is bound by residues 45 to 46 (DG), 121 to 122 (NE), Arg147, Asp149, Ala184, and Gln221.

The protein belongs to the NAD kinase family. Requires a divalent metal cation as cofactor.

It localises to the cytoplasm. It catalyses the reaction NAD(+) + ATP = ADP + NADP(+) + H(+). Its function is as follows. Involved in the regulation of the intracellular balance of NAD and NADP, and is a key enzyme in the biosynthesis of NADP. Catalyzes specifically the phosphorylation on 2'-hydroxyl of the adenosine moiety of NAD to yield NADP. This is NAD kinase from Leuconostoc citreum (strain KM20).